The sequence spans 239 residues: Elongation factor Ts (239 aa).

The involved in Mg(2+) ion dislocation from EF-Tu stretch occupies residues 82–85; sequence TDFV. The interval 213 to 239 is disordered; the sequence is AAQTKPKAEEKPAAKKATSKKKKGKKK. The segment covering 229 to 239 has biased composition (basic residues); sequence ATSKKKKGKKK.

This sequence belongs to the EF-Ts family.

The protein localises to the cytoplasm. In terms of biological role, associates with the EF-Tu.GDP complex and induces the exchange of GDP to GTP. It remains bound to the aminoacyl-tRNA.EF-Tu.GTP complex up to the GTP hydrolysis stage on the ribosome. This is Elongation factor Ts from Acaryochloris marina (strain MBIC 11017).